The following is a 239-amino-acid chain: tRNA (guanine-N(1)-)-methyltransferase (239 aa).

S-adenosyl-L-methionine is bound by residues glycine 112 and 132-137; that span reads IGDYVL.

This sequence belongs to the RNA methyltransferase TrmD family. Homodimer.

Its subcellular location is the cytoplasm. It catalyses the reaction guanosine(37) in tRNA + S-adenosyl-L-methionine = N(1)-methylguanosine(37) in tRNA + S-adenosyl-L-homocysteine + H(+). Specifically methylates guanosine-37 in various tRNAs. The protein is tRNA (guanine-N(1)-)-methyltransferase of Rhodospirillum rubrum (strain ATCC 11170 / ATH 1.1.1 / DSM 467 / LMG 4362 / NCIMB 8255 / S1).